A 677-amino-acid chain; its full sequence is Collagen alpha-2(IX) chain (677 aa).

An N-terminal signal peptide occupies residues 1–21 (MAHRSPALCLLLLHAACLCLA). The triple-helical region 4 (COL4) stretch occupies residues 25 to 161 (GPPGEPGPRG…PGKPGPPGHI (137 aa)). The segment covering 28–41 (GEPGPRGPPGPPGV) has biased composition (pro residues). The segment at 28–516 (GEPGPRGPPG…MPGQRGVAGR (489 aa)) is disordered. The segment covering 53–66 (SPGAPGSPGAKGEP) has biased composition (low complexity). Residues 68–77 (APGPDGPPGK) are compositionally biased toward pro residues. A compositionally biased stretch (gly residues) spans 91–100 (GPWGGQGLKG). Pro residues-rich tracts occupy residues 104–121 (LPGPPGLPGPSLPGPPGL) and 137–158 (KGDPGPDGPRGPPGPPGKPGPP). A 4-hydroxyproline modification is found at P158. A nonhelical region 4 (NC4) region spans residues 162–178 (QGVEGSADFLCPTNCPP). An O-linked (Xyl...) (glycosaminoglycan) serine glycan is attached at S167. P178 bears the 4-hydroxyproline mark. The tract at residues 179–517 (GPKGPQGLQG…PGQRGVAGRD (339 aa)) is triple-helical region 3 (COL3). K181 is subject to 5-hydroxylysine. An O-linked (Gal...) hydroxylysine glycan is attached at K181. An Allysine modification is found at K190. Composition is skewed to low complexity over residues 363 to 382 (TPGLDGEPGPPGDAGTAGVP), 430 to 442 (PGKTGPKGSTGDP), and 496 to 505 (RGLLGERGVP). The tract at residues 518–547 (AGDQHIIDVVLKMMQEQLAEVAVSAKRAAL) is nonhelical region 3 (NC3). The tract at residues 548–630 (GGVGAMGPPG…PGLPGIPGHA (83 aa)) is triple-helical region 2 (COL2). Residues 550-657 (VGAMGPPGPP…GRPGSPGPAG (108 aa)) are disordered. Residues 555–565 (PPGPPGPPGPP) show a composition bias toward pro residues. Positions 597–609 (KRGEKGERGDTGR) are enriched in basic and acidic residues. A nonhelical region 2 (NC2) region spans residues 631 to 632 (LA). The tract at residues 633–662 (GKDGERGPPGVPGDAGRPGSPGPAGLPGFC) is triple-helical region 1 (COL1). Positions 663–677 (EPAACLGALPTPRHG) are nonhelical region 1 (NC1).

Belongs to the fibril-associated collagens with interrupted helices (FACIT) family. Heterotrimer of an alpha 1(IX), an alpha 2(IX) and an alpha 3(IX) chain. The chains are linked to each other by interchain disulfide bonds. Trimers are also cross-linked via hydroxylysines. Post-translationally, covalently linked to the telopeptides of type II collagen by lysine-derived cross-links. Prolines at the third position of the tripeptide repeating unit (G-X-Y) are hydroxylated in some or all of the chains.

Its subcellular location is the secreted. It localises to the extracellular space. The protein resides in the extracellular matrix. In terms of biological role, structural component of hyaline cartilage and vitreous of the eye. The polypeptide is Collagen alpha-2(IX) chain (COL9A2) (Gallus gallus (Chicken)).